Consider the following 337-residue polypeptide: Pyrophosphate--fructose 6-phosphate 1-phosphotransferase (337 aa).

Glycine 10 serves as a coordination point for diphosphate. Aspartate 101 contacts Mg(2+). Residues threonine 124–aspartate 126, arginine 161, methionine 168–arginine 170, glutamate 220, arginine 257, and histidine 263–arginine 266 each bind substrate. The Proton acceptor role is filled by aspartate 126.

The protein belongs to the phosphofructokinase type A (PFKA) family. Mixed-substrate PFK group III subfamily. In terms of assembly, homodimer or homotrimer. It depends on Mg(2+) as a cofactor.

The protein localises to the cytoplasm. The catalysed reaction is beta-D-fructose 6-phosphate + diphosphate = beta-D-fructose 1,6-bisphosphate + phosphate + H(+). Its pathway is carbohydrate degradation; glycolysis; D-glyceraldehyde 3-phosphate and glycerone phosphate from D-glucose: step 3/4. Its activity is regulated as follows. Non-allosteric. Functionally, catalyzes the phosphorylation of D-fructose 6-phosphate, the first committing step of glycolysis. Uses inorganic phosphate (PPi) as phosphoryl donor instead of ATP like common ATP-dependent phosphofructokinases (ATP-PFKs), which renders the reaction reversible, and can thus function both in glycolysis and gluconeogenesis. Consistently, PPi-PFK can replace the enzymes of both the forward (ATP-PFK) and reverse (fructose-bisphosphatase (FBPase)) reactions. This is Pyrophosphate--fructose 6-phosphate 1-phosphotransferase from Thermoproteus tenax (strain ATCC 35583 / DSM 2078 / JCM 9277 / NBRC 100435 / Kra 1).